The chain runs to 919 residues: Glutamate receptor ionotropic, kainate 3 (919 aa).

The signal sequence occupies residues 1–31; the sequence is MTAPWRRLRSLVWEYWAGFLVCAFWIPDSRG. At 32–563 the chain is on the extracellular side; the sequence is MPHVIRIGGI…VFSFLNPLSP (532 aa). N-linked (GlcNAc...) asparagine glycosylation is found at asparagine 70, asparagine 76, asparagine 278, asparagine 381, asparagine 415, asparagine 426, and asparagine 433. A disulfide bridge connects residues cysteine 99 and cysteine 350. L-glutamate-binding residues include proline 518, threonine 520, and arginine 525. Asparagine 548 and asparagine 551 each carry an N-linked (GlcNAc...) asparagine glycan. The chain crosses the membrane as a helical span at residues 564–584; it reads DIWMYVLLAYLGVSCVLFVIA. The Cytoplasmic portion of the chain corresponds to 585–636; that stretch reads RFSPYEWYDAHPCNPGSEVVENNFTLLNSFWFGMGSLMQQGSELMPKALSTR. A helical transmembrane segment spans residues 637 to 657; that stretch reads IIGGIWWFFTLIIISSYTANL. Over 658–820 the chain is Extracellular; sequence AAFLTVERME…KEASALGIQK (163 aa). Positions 691, 692, and 739 each coordinate L-glutamate. Asparagine 752 is a glycosylation site (N-linked (GlcNAc...) asparagine). A helical transmembrane segment spans residues 821–841; sequence IGGIFIVLAAGLVLSVLVAVG. Topologically, residues 842 to 919 are cytoplasmic; it reads EFIYKLRKTA…CSTSLAPVFP (78 aa). Serine 869 is subject to Phosphoserine. A Glycyl lysine isopeptide (Lys-Gly) (interchain with G-Cter in SUMO1) cross-link involves residue lysine 887.

The protein belongs to the glutamate-gated ion channel (TC 1.A.10.1) family. GRIK3 subfamily. In terms of assembly, homotetramer, and heterotetramer with either GRIK4 or GRIK5. Can form functional heteromeric receptors with GRIK2. Interacts with PRKCABP. Interacts with NETO2. In terms of tissue distribution, detected in whole brain, cerebellum, brain cortex and hippocampus.

It is found in the cell membrane. It localises to the postsynaptic cell membrane. The enzyme catalyses Ca(2+)(in) = Ca(2+)(out). With respect to regulation, glutamate-gated receptor activity inhibited by spermine. Functionally, ionotropic glutamate receptor that functions as a cation-permeable ligand-gated ion channel, gated by L-glutamate and the glutamatergic agonist kainic acid. Binding of the excitatory neurotransmitter L-glutamate induces a conformation change, leading to the opening of the cation channel, and thereby converts the chemical signal to an electrical impulse. The receptor then desensitizes rapidly and enters a transient inactive state, characterized by the presence of bound agonist. In association with GRIK2, involved in presynaptic facilitation of glutamate release at hippocampal mossy fiber synapses. In Mus musculus (Mouse), this protein is Glutamate receptor ionotropic, kainate 3 (Grik3).